The chain runs to 195 residues: Imidazoleglycerol-phosphate dehydratase (195 aa).

This sequence belongs to the imidazoleglycerol-phosphate dehydratase family.

It is found in the cytoplasm. The enzyme catalyses D-erythro-1-(imidazol-4-yl)glycerol 3-phosphate = 3-(imidazol-4-yl)-2-oxopropyl phosphate + H2O. Its pathway is amino-acid biosynthesis; L-histidine biosynthesis; L-histidine from 5-phospho-alpha-D-ribose 1-diphosphate: step 6/9. This Frankia casuarinae (strain DSM 45818 / CECT 9043 / HFP020203 / CcI3) protein is Imidazoleglycerol-phosphate dehydratase.